The sequence spans 138 residues: Gonadotropin subunit beta-2 (138 aa).

The signal sequence occupies residues 1–21 (MPASSYFLLFFFMNFFSPAQS). Intrachain disulfides connect C27/C75, C41/C90, C44/C128, C52/C106, C56/C108, and C111/C118. N-linked (GlcNAc...) asparagine glycosylation is present at N31.

The protein belongs to the glycoprotein hormones subunit beta family. Heterodimer of an alpha and a beta chain.

It localises to the secreted. Its function is as follows. Involved in gametogenesis and steroidogenesis. This is Gonadotropin subunit beta-2 (cgbb) from Clarias gariepinus (North African catfish).